Reading from the N-terminus, the 429-residue chain is 3-phosphoshikimate 1-carboxyvinyltransferase (429 aa).

3-phosphoshikimate is bound by residues lysine 22, serine 23, and arginine 27. Lysine 22 is a binding site for phosphoenolpyruvate. 2 residues coordinate phosphoenolpyruvate: glycine 94 and arginine 122. Serine 167, glutamine 169, aspartate 315, and lysine 342 together coordinate 3-phosphoshikimate. Position 169 (glutamine 169) interacts with phosphoenolpyruvate. The active-site Proton acceptor is the aspartate 315. Arginine 346 and arginine 388 together coordinate phosphoenolpyruvate.

The protein belongs to the EPSP synthase family. In terms of assembly, monomer.

It is found in the cytoplasm. It carries out the reaction 3-phosphoshikimate + phosphoenolpyruvate = 5-O-(1-carboxyvinyl)-3-phosphoshikimate + phosphate. It participates in metabolic intermediate biosynthesis; chorismate biosynthesis; chorismate from D-erythrose 4-phosphate and phosphoenolpyruvate: step 6/7. In terms of biological role, catalyzes the transfer of the enolpyruvyl moiety of phosphoenolpyruvate (PEP) to the 5-hydroxyl of shikimate-3-phosphate (S3P) to produce enolpyruvyl shikimate-3-phosphate and inorganic phosphate. The chain is 3-phosphoshikimate 1-carboxyvinyltransferase from Geobacter sp. (strain M21).